The chain runs to 330 residues: DNA-directed RNA polymerase subunit alpha (330 aa).

Residues 1-231 (MAILAFQKPD…IYHFMLFSDE (231 aa)) are alpha N-terminal domain (alpha-NTD). The alpha C-terminal domain (alpha-CTD) stretch occupies residues 253 to 330 (MRQLLKTKLV…DISKYKLDKE (78 aa)).

The protein belongs to the RNA polymerase alpha chain family. Homodimer. The RNAP catalytic core consists of 2 alpha, 1 beta, 1 beta' and 1 omega subunit. When a sigma factor is associated with the core the holoenzyme is formed, which can initiate transcription.

It carries out the reaction RNA(n) + a ribonucleoside 5'-triphosphate = RNA(n+1) + diphosphate. Functionally, DNA-dependent RNA polymerase catalyzes the transcription of DNA into RNA using the four ribonucleoside triphosphates as substrates. In Phocaeicola vulgatus (strain ATCC 8482 / DSM 1447 / JCM 5826 / CCUG 4940 / NBRC 14291 / NCTC 11154) (Bacteroides vulgatus), this protein is DNA-directed RNA polymerase subunit alpha.